The following is a 313-amino-acid chain: Porphobilinogen deaminase (313 aa).

C241 is subject to S-(dipyrrolylmethanemethyl)cysteine.

Belongs to the HMBS family. As to quaternary structure, monomer. Requires dipyrromethane as cofactor.

It catalyses the reaction 4 porphobilinogen + H2O = hydroxymethylbilane + 4 NH4(+). It functions in the pathway porphyrin-containing compound metabolism; protoporphyrin-IX biosynthesis; coproporphyrinogen-III from 5-aminolevulinate: step 2/4. Its function is as follows. Tetrapolymerization of the monopyrrole PBG into the hydroxymethylbilane pre-uroporphyrinogen in several discrete steps. The protein is Porphobilinogen deaminase of Idiomarina loihiensis (strain ATCC BAA-735 / DSM 15497 / L2-TR).